A 482-amino-acid chain; its full sequence is Zinc finger protein 385B (482 aa).

The segment at 1 to 105 (MNMATFLRGF…TGSACHTTTL (105 aa)) is required for induction of apoptosis. 2 Matrin-type zinc fingers span residues 34–64 (SFCEVCNIQLNSAAQAQVHYDGKSHRKRVKQ) and 169–199 (ISCNVCQLRFNSDSQAEAHYKGSKHAKKVKA). Disordered stretches follow at residues 54 to 75 (DGKSHRKRVKQLSDGQPPPPVQ), 189 to 259 (KGSK…SFLL), and 268 to 287 (LGAIASPSKSTNGAPGSVAE). The interaction with p53/TP53 stretch occupies residues 106-482 (PALVRTPTLM…TPASILFAPY (377 aa)). Over residues 231 to 240 (SSDKSEDKGK) the composition is skewed to basic and acidic residues. The segment at 294 to 328 (KKLLYCSLCKVAVNSLSQLEAHNTGSKHKTMVEAR) adopts a Matrin-type 3 zinc-finger fold. 2 disordered regions span residues 331 to 352 (AGPIKSYPRPGSRLKVQNGSKG) and 378 to 397 (HISSRRHKDRVAGKPLKPKY). A Matrin-type 4 zinc finger spans residues 360-390 (FHCEICDVHVNSEIQLKQHISSRRHKDRVAG).

As to quaternary structure, interacts with p53/TP53; the interaction is direct.

It is found in the nucleus. Its function is as follows. May play a role in p53/TP53-mediated apoptosis. The sequence is that of Zinc finger protein 385B (Znf385b) from Mus musculus (Mouse).